The following is a 238-amino-acid chain: Ion-translocating oxidoreductase complex subunit E (238 aa).

The next 6 membrane-spanning stretches (helical) occupy residues 20–40 (ALVQ…VVNA), 41–61 (LGLG…VSLI), 72–92 (PAFV…MKAF), 95–115 (ELYQ…AVLG), 130–150 (AVDG…VGAV), and 185–205 (NVIF…LIAA).

This sequence belongs to the NqrDE/RnfAE family. In terms of assembly, the complex is composed of six subunits: RnfA, RnfB, RnfC, RnfD, RnfE and RnfG.

Its subcellular location is the cell inner membrane. Functionally, part of a membrane-bound complex that couples electron transfer with translocation of ions across the membrane. This chain is Ion-translocating oxidoreductase complex subunit E, found in Cellvibrio japonicus (strain Ueda107) (Pseudomonas fluorescens subsp. cellulosa).